A 359-amino-acid chain; its full sequence is Protein disulfide-isomerase tigA (359 aa).

Positions 1–19 (MVRLSNLVSCLGLASAVTA) are cleaved as a signal peptide. 2 consecutive Thioredoxin domains span residues 20–129 (AVVD…EKTG) and 131–250 (KPRG…EKTG). Active-site nucleophile residues include C49, C52, C169, and C172. Cystine bridges form between C49/C52 and C169/C172. Residues 356 to 359 (KDEL) carry the Prevents secretion from ER motif.

It belongs to the protein disulfide isomerase family.

The protein resides in the endoplasmic reticulum lumen. It carries out the reaction Catalyzes the rearrangement of -S-S- bonds in proteins.. This Aspergillus niger protein is Protein disulfide-isomerase tigA (tigA).